The primary structure comprises 1094 residues: DNA polymerase delta catalytic subunit (1094 aa).

Positions 1003, 1006, 1016, and 1019 each coordinate Zn(2+). Residues 1003 to 1019 form a CysA-type zinc finger; it reads CIGCNSSIKKPPLCNHC. [4Fe-4S] cluster contacts are provided by C1049, C1052, C1062, and C1067. The CysB motif signature appears at 1049–1067; sequence CQRCQGNLHVDVICMNRDC.

This sequence belongs to the DNA polymerase type-B family. As to quaternary structure, heterodimer composed of a catalytic subunit POLD and a small regulatory subunit. Requires [4Fe-4S] cluster as cofactor. The cofactor is Mg(2+).

The protein resides in the nucleus. It carries out the reaction DNA(n) + a 2'-deoxyribonucleoside 5'-triphosphate = DNA(n+1) + diphosphate. The small regulatory subunit delta and PCNA1 increase POLD catalytic activity. In terms of biological role, this polymerase possesses two enzymatic activities: DNA synthesis (polymerase) and an exonucleolytic activity that degrades single-stranded DNA in the 3'- to 5'-direction. The sequence is that of DNA polymerase delta catalytic subunit (POLD) from Plasmodium falciparum (isolate K1 / Thailand).